The chain runs to 494 residues: Bifunctional protein HldE (494 aa).

The tract at residues 1–334 (MPTPILDFDA…RKILPHAYLA (334 aa)) is ribokinase. 209-212 (NRKE) is an ATP binding site. Asp279 is an active-site residue. The cytidylyltransferase stretch occupies residues 362–494 (FTNGCFDILH…LVHRARGGAK (133 aa)).

It in the N-terminal section; belongs to the carbohydrate kinase PfkB family. In the C-terminal section; belongs to the cytidylyltransferase family. In terms of assembly, homodimer.

The catalysed reaction is D-glycero-beta-D-manno-heptose 7-phosphate + ATP = D-glycero-beta-D-manno-heptose 1,7-bisphosphate + ADP + H(+). The enzyme catalyses D-glycero-beta-D-manno-heptose 1-phosphate + ATP + H(+) = ADP-D-glycero-beta-D-manno-heptose + diphosphate. It functions in the pathway nucleotide-sugar biosynthesis; ADP-L-glycero-beta-D-manno-heptose biosynthesis; ADP-L-glycero-beta-D-manno-heptose from D-glycero-beta-D-manno-heptose 7-phosphate: step 1/4. Its pathway is nucleotide-sugar biosynthesis; ADP-L-glycero-beta-D-manno-heptose biosynthesis; ADP-L-glycero-beta-D-manno-heptose from D-glycero-beta-D-manno-heptose 7-phosphate: step 3/4. In terms of biological role, catalyzes the phosphorylation of D-glycero-D-manno-heptose 7-phosphate at the C-1 position to selectively form D-glycero-beta-D-manno-heptose-1,7-bisphosphate. Functionally, catalyzes the ADP transfer from ATP to D-glycero-beta-D-manno-heptose 1-phosphate, yielding ADP-D-glycero-beta-D-manno-heptose. This chain is Bifunctional protein HldE, found in Bradyrhizobium diazoefficiens (strain JCM 10833 / BCRC 13528 / IAM 13628 / NBRC 14792 / USDA 110).